We begin with the raw amino-acid sequence, 149 residues long: MSNQVTKSDNSEPLAPAGEPAIRVIAMPANTNADGRMFGGWLMGMLDQAAGLVAARHALARVVTVAADSITFHAPVQVGDELSLYARLVKVGRTSMKIEVEGWRRVRHELETIKAISGLFTFVAIDEDRRPCQVPPMNETRLLSDKADK.

One can recognise a HotDog ACOT-type domain in the interval 16 to 128 (PAGEPAIRVI…LFTFVAIDED (113 aa)).

It belongs to the acyl coenzyme A hydrolase family.

This is an uncharacterized protein from Zymomonas mobilis subsp. mobilis (strain ATCC 31821 / ZM4 / CP4).